We begin with the raw amino-acid sequence, 423 residues long: MASPRVFPLSCVVQQYAWGKVGSKSEVACLLASSDPLAQISEDKPYAELWMGTHPRGDAKILDNRISQKTLGQWIAENPDCLGSKVKNTFNGKLPFLFKVLSVDTALSIQAHPNKELAEKLHLQAPEHYPDANHKPEMAIALTSFQGLCGFRPVEEIVTFMKKVPEFQLLIGDDATAQLKESVGGDTEAMASALRNCFSHLMKSEKKVVVEQLNLLVKRISQQVFDGNNMEDIYGKLLLQLHQQHPGDIGCFAIYFLNLLTLKPGEAMFLDANVPHAYLKGDCVECMACSDNTVRAGLTPKFIDVPTLCEMLNYTPSPSNNRLFAPAQSQDDPYLSIYDPPVPDFTVMKMEVPSSVTEYKVSTLDSASILLMVQGTVTAIIPSAHAEIPLYRGGVLFIAANESVLLKITVPKDLLIFRACCLL.

Ala-2 is subject to N-acetylalanine. 2 positions are modified to phosphoserine: Ser-102 and Ser-108. 4 residues coordinate Zn(2+): Gln-110, His-112, Glu-137, and His-276. Arg-295 is a catalytic residue.

It belongs to the mannose-6-phosphate isomerase type 1 family. Requires Zn(2+) as cofactor. In terms of tissue distribution, expressed in all tissues, but more abundant in testis.

The protein localises to the cytoplasm. It catalyses the reaction D-mannose 6-phosphate = D-fructose 6-phosphate. It participates in nucleotide-sugar biosynthesis; GDP-alpha-D-mannose biosynthesis; alpha-D-mannose 1-phosphate from D-fructose 6-phosphate: step 1/2. In terms of biological role, isomerase that catalyzes the interconversion of fructose-6-P and mannose-6-P and has a critical role in the supply of D-mannose derivatives required for many eukaryotic glycosylation reactions. This chain is Mannose-6-phosphate isomerase, found in Mus musculus (Mouse).